Reading from the N-terminus, the 2647-residue chain is Filamin-A (2647 aa).

The interval 1 to 37 is disordered; it reads MSSSHSRCGQSAAVASPGGSIDSRDAEMPATEKDLAE. S2 is modified (N-acetylserine). An actin-binding region spans residues 2-274; that stretch reads SSSHSRCGQS…PKAKLKPGAP (273 aa). 3 positions are modified to phosphoserine: S11, S16, and S20. The segment covering 22 to 37 has biased composition (basic and acidic residues); sequence DSRDAEMPATEKDLAE. Glycyl lysine isopeptide (Lys-Gly) (interchain with G-Cter in ubiquitin) cross-links involve residues K42, K43, and K135. 2 consecutive Calponin-homology (CH) domains span residues 43–149 and 166–269; these read KIQQ…LHYS and QTPK…KAKL. Residues 271–294 form a disordered region; it reads PGAPLRPKLNPKKARAYGPGIEPT. Filamin repeat units lie at residues 276–374, 376–474, 475–570, 571–663, 667–763, 764–866, 867–965, 966–1061, 1062–1154, 1155–1249, 1250–1349, 1350–1442, 1443–1539, 1540–1636, and 1641–1740; these read RPKL…EVYV, KSQG…TVTV, GQAC…EVKV, GTEC…MADI, PQDF…RVNV, GAGS…RVKV, EPSH…SVGV, SPSL…PLEA, VAPT…KAHV, APCF…KLQV, EPAV…QVPV, TEGC…KVPV, HDVT…KVKV, LPTH…RVRA, and DASK…QVTA. K299 participates in a covalent cross-link: Glycyl lysine isopeptide (Lys-Gly) (interchain with G-Cter in SUMO1); alternate. A Glycyl lysine isopeptide (Lys-Gly) (interchain with G-Cter in SUMO2); alternate cross-link involves residue K299. 2 positions are modified to N6-acetyllysine: K376 and K508. Residues K700, K781, K837, K865, and K906 each carry the N6-acetyllysine modification. 2 positions are modified to phosphoserine: S968 and S1055. K1071 is subject to N6-acetyllysine; alternate. N6-succinyllysine; alternate is present on K1071. At S1084 the chain carries Phosphoserine. T1089 carries the post-translational modification Phosphothreonine. S1301 and S1338 each carry phosphoserine. The residue at position 1372 (K1372) is an N6-acetyllysine. 2 positions are modified to phosphoserine: S1459 and S1533. An interaction with furin region spans residues 1490–1607; it reads PKGLVEPVDV…DNHDGTYTVA (118 aa). K1538 is modified (N6-acetyllysine). Phosphoserine occurs at positions 1630 and 1734. The hinge 1 stretch occupies residues 1741-1778; sequence LAGDQPTVQTPLRSQQLAPQYNYPQGSQQTWIPERPMV. Position 1750 is a phosphothreonine (T1750). Filamin repeat units lie at residues 1765–1860, 1861–1952, 1953–2039, 2042–2134, 2135–2230, 2233–2325, 2327–2420, and 2424–2516; these read QGSQ…QFYV, DYVN…TARV, TGDD…PVVI, SEIG…SVKV, TGEG…QFTV, LGEG…VVPV, SPSG…KIRV, and GHGG…KAKV. Phosphoserine is present on S1835. A phosphoserine mark is found at S1967, S2053, S2128, S2152, S2158, S2163, S2180, S2284, S2327, and S2329. Phosphothreonine is present on T2336. Residues S2338, S2370, S2414, S2510, S2523, and S2526 each carry the phosphoserine modification. Residues 2517-2553 are hinge 2; sequence TGPRLVSNHSLHETSSVFVDSLTKVATVPQHATSGPG. The interval 2517 to 2647 is self-association site, tail; it reads TGPRLVSNHS…PGSPYRIMVP (131 aa). Residues 2552-2646 form a Filamin 24 repeat; the sequence is PGPADVSKVV…IPGSPYRIMV (95 aa). K2569 carries the N6-acetyllysine; alternate modification. K2569 is subject to N6-succinyllysine; alternate. Residue K2575 is modified to N6-acetyllysine. At T2599 the chain carries Phosphothreonine. An N6-acetyllysine mark is found at K2607 and K2621.

This sequence belongs to the filamin family. As to quaternary structure, homodimer. Interacts with FCGR1A, FLNB, FURIN, HSPB7, KCND2, INPPL1, MYOT, MYOZ1, PDLIM2, ARHGAP24, PSEN1, PSEN2 and ECSCR. Also interacts with various other binding partners in addition to filamentous actin. Interacts (via N-terminus) with TAF1B. Interacts (via N-terminus) with MIS18BP1 (via N-terminus). Interacts with TMEM67 (via C-terminus) and MKS1. Interacts (via actin-binding domain) with MICALL2 (via calponin-homology (CH) domain). Interacts with RFLNA and RFLNB. Interacts (via filamin repeat 5) with SYK; docks SYK to the plasma membrane. Interacts (via filamin repeats 19 and 21) with DRD3; increased PKA-mediated phosphorylation at Ser-2152. Interacts (via filamin repeat 21) with MAS1, AGTR1 and ADRA1D; increases PKA-mediated phosphorylation of FLNA at Ser-2152. Interacts (via filamin repeats 4, 9, 12, 17, 19, 21, and 23) with GP1BA (high affinity), ITGB7, ITGB2 and FBLIM1. Interacts with CEACAM1 (via cytoplasmic domain); inhibits cell migration and cell scattering by interfering with the interaction between FLNA and RALA. Interacts with FOXC1. Interacts (via calponin-homology (CH) domain 1 and filamin repeat 24) with CRMP1; the interaction alters FLNA ternary structure and thus promotes FLNA dissociation from F-actin. Interacts with DPYSL3/CRMP3 and DPYSL4/CRMP4. Post-translationally, phosphorylation at Ser-2152 is negatively regulated by the autoinhibited conformation of filamin repeats 19-21. Ligand binding induces a conformational switch triggering phosphorylation at Ser-2152 by PKA. Polyubiquitination in the CH1 domain by a SCF-like complex containing ASB2 leads to proteasomal degradation. Prior dissociation from actin may be required to expose the target lysines. Ubiquitinated in endothelial cells by RNF213 downstream of the non-canonical Wnt signaling pathway, leading to its degradation by the proteasome. As to expression, widely expressed. Highly expressed in Purkinje cells.

It localises to the cytoplasm. It is found in the cell cortex. The protein localises to the cytoskeleton. Its subcellular location is the perikaryon. The protein resides in the cell projection. It localises to the growth cone. It is found in the podosome. In terms of biological role, actin binding protein that promotes orthogonal branching of actin filaments and links actin filaments to membrane glycoproteins. Anchors various transmembrane proteins to the actin cytoskeleton and serves as a scaffold for a wide range of cytoplasmic signaling proteins. Interaction with FLNB may allow neuroblast migration from the ventricular zone into the cortical plate. Tethers cell surface-localized furin, modulates its rate of internalization and directs its intracellular trafficking. Involved in ciliogenesis. Plays a role in cell-cell contacts and adherens junctions during the development of blood vessels, heart and brain organs. Plays a role in platelets morphology through interaction with SYK that regulates ITAM- and ITAM-like-containing receptor signaling, resulting in by platelet cytoskeleton organization maintenance. During the axon guidance process, required for growth cone collapse induced by SEMA3A-mediated stimulation of neurons. In Mus musculus (Mouse), this protein is Filamin-A (Flna).